The following is a 130-amino-acid chain: Nascent polypeptide-associated complex protein (130 aa).

Positions 8-75 (PKMMRQMQKM…AKNIKKDDIK (68 aa)) constitute an NAC-A/B domain.

This sequence belongs to the NAC-alpha family. In terms of assembly, homodimer. Interacts with the ribosome. Binds ribosomal RNA.

Contacts the emerging nascent chain on the ribosome. This Methanococcus aeolicus (strain ATCC BAA-1280 / DSM 17508 / OCM 812 / Nankai-3) protein is Nascent polypeptide-associated complex protein.